Reading from the N-terminus, the 349-residue chain is Sesquiterpene synthase MAC_05714 (349 aa).

Mg(2+) is bound by residues Asp-91 and Asp-96. The short motif at 91–96 (DDLFVD) is the DDXXXD motif element. Arg-184 lines the substrate pocket. Mg(2+) contacts are provided by Asn-230, Ser-234, and Glu-238.

The protein belongs to the terpene synthase family. Mg(2+) serves as cofactor.

It catalyses the reaction (2E,6E)-farnesyl diphosphate + H2O = (+)-corvol ether B + diphosphate. The catalysed reaction is (2E,6E)-farnesyl diphosphate + H2O = (+)-corvol ether A + diphosphate. Terpene synthase that catalyzes the conversion of (2E,6E)-farnesyl diphosphate (FPP) into sesquiterpenes which are important for fungi-environment interactions. Produces a mixture consisting of 8 sesquiterpenes including corvol ethers A and B, as well as traces of epizonarene, gamma-cadinene, delta-cadinene, alpha-cadinene, alpha-cadinol, and an unidentified sesquiterpene. Produces both corvol ether A and corvol ether B in similar concentrations. The chain is Sesquiterpene synthase MAC_05714 from Metarhizium acridum (strain CQMa 102).